Reading from the N-terminus, the 800-residue chain is Transducin beta-like protein 3 (800 aa).

Ala2 is subject to N-acetylalanine. WD repeat units lie at residues Glu64–Lys105, Ile107–His146, Gly149–Val190, Ala193–Thr232, Leu245–Ala284, Gly290–Gln329, Gly332–Leu372, Gly374–Cys413, Gly419–Gly459, Cys477–Thr516, Gly519–Glu560, His562–Asp602, and His604–Glu642. Ser257 is subject to Phosphoserine. A Glycyl lysine isopeptide (Lys-Gly) (interchain with G-Cter in SUMO2) cross-link involves residue Lys407.

As to quaternary structure, part of the small subunit (SSU) processome, composed of more than 70 proteins and the RNA chaperone small nucleolar RNA (snoRNA) U3.

The protein resides in the nucleus. It localises to the nucleolus. Its function is as follows. Part of the small subunit (SSU) processome, first precursor of the small eukaryotic ribosomal subunit. During the assembly of the SSU processome in the nucleolus, many ribosome biogenesis factors, an RNA chaperone and ribosomal proteins associate with the nascent pre-rRNA and work in concert to generate RNA folding, modifications, rearrangements and cleavage as well as targeted degradation of pre-ribosomal RNA by the RNA exosome. The protein is Transducin beta-like protein 3 (TBL3) of Bos taurus (Bovine).